The primary structure comprises 397 residues: LIM/homeobox protein Lhx3 (397 aa).

2 LIM zinc-binding domains span residues 31–81 and 90–144; these read CAGC…CKDD and CAAC…CKAD. Threonine 63 bears the Phosphothreonine mark. Serine 71 carries the phosphoserine modification. Positions 157-216 form a DNA-binding region, homeobox; it reads AKRPRTTITAKQLETLKSAYNTSPKPARHVREQLSSETGLDMRVVQVWFQNRRAKEKRLK. Residues 212 to 397 are disordered; sequence EKRLKKDAGR…WLDEVDHAQF (186 aa). Tyrosine 227 bears the Phosphotyrosine mark. Phosphoserine occurs at positions 234 and 238. Positions 316–331 are enriched in pro residues; that stretch reads GVPPSPAAPQSLPGPQ.

As to quaternary structure, interacts with POU1F1. At neuronal promoters, interacts with LDB1, in motor neurons LDB1 is displaced by ISL1 and a ternary complex is formed in which ISL1 contacts both LHX3 and LDB1; allosteric structural changes in the DNA binding domain of LHX3, induced by the ISL1-LHX3 interaction, may explain differences in sequence specificity of the different complexes. Interacts with LDB2. May interact with CITED2/MRG1.

It localises to the nucleus. Its function is as follows. Transcription factor. Recognizes and binds to the consensus sequence motif 5'-AATTAATTA-3' in the regulatory elements of target genes, such as glycoprotein hormones alpha chain CGA and visual system homeobox CHX10, positively modulating transcription; transcription can be co-activated by LDB2. Synergistically enhances transcription from the prolactin promoter in cooperation with POU1F1/Pit-1. Required for the establishment of the specialized cells of the pituitary gland and the nervous system. Involved in the development of interneurons and motor neurons in cooperation with LDB1 and ISL1. This Homo sapiens (Human) protein is LIM/homeobox protein Lhx3 (LHX3).